A 424-amino-acid chain; its full sequence is Steryl acetyl hydrolase 1 (424 aa).

Position 2 is an N-acetylalanine (Ala2). The Cytoplasmic portion of the chain corresponds to 2 to 45; the sequence is AANSGLDSKVEYYRLQENEIISAVSSEDADQNDAGFRLSTIHLH. The chain crosses the membrane as a helical; Signal-anchor for type II membrane protein span at residues 46–66; that stretch reads LFHGLKFAALLFTVVPVFIIL. Topologically, residues 67–424 are lumenal; it reads DSMKIIFQRK…IARILEFMQS (358 aa). A glycan (N-linked (GlcNAc...) asparagine) is linked at Asn85. The Involved in the stabilization of the negatively charged intermediate by the formation of the oxyanion hole motif lies at 176–178; the sequence is HGG. Residue Ser250 is part of the active site. Asn283 is a glycosylation site (N-linked (GlcNAc...) asparagine). The active site involves His395. Asn401 carries an N-linked (GlcNAc...) asparagine glycan.

This sequence belongs to the 'GDXG' lipolytic enzyme family.

The protein resides in the endoplasmic reticulum membrane. Functionally, required for the deacetylation of acetylated sterols. Involved in the resistance to eugenol and pregnenolone toxicity. This is Steryl acetyl hydrolase 1 (SAY1) from Saccharomyces cerevisiae (strain ATCC 204508 / S288c) (Baker's yeast).